The following is a 130-amino-acid chain: Methylglyoxal synthase (130 aa).

Positions methionine 1–alanine 130 constitute an MGS-like domain. Substrate is bound by residues histidine 11, lysine 15, threonine 37–threonine 40, and serine 57–glycine 58. The active-site Proton donor/acceptor is aspartate 63. Residue histidine 90 participates in substrate binding.

Belongs to the methylglyoxal synthase family.

It catalyses the reaction dihydroxyacetone phosphate = methylglyoxal + phosphate. In terms of biological role, catalyzes the formation of methylglyoxal from dihydroxyacetone phosphate. The protein is Methylglyoxal synthase of Burkholderia mallei (strain NCTC 10247).